Reading from the N-terminus, the 513-residue chain is Putative fucosyltransferase-like protein (513 aa).

A disordered region spans residues 1–34 (MGVFSNLRGPRAGATHDEFPATNGSPSSSSSPSS). Residues 1–39 (MGVFSNLRGPRAGATHDEFPATNGSPSSSSSPSSSIKRK) lie on the Cytoplasmic side of the membrane. A compositionally biased stretch (low complexity) spans 25 to 34 (SPSSSSSPSS). A helical; Signal-anchor for type II membrane protein transmembrane segment spans residues 40 to 60 (LSNLLPLCVALVVIAEIGFLG). The Lumenal segment spans residues 61 to 513 (RLDKVALVDT…PCAKFEVVFV (453 aa)). Residues Asn348 and Asn493 are each glycosylated (N-linked (GlcNAc...) asparagine).

The protein belongs to the glycosyltransferase 10 family.

It is found in the golgi apparatus. The protein resides in the golgi stack membrane. Its pathway is protein modification; protein glycosylation. Functionally, may be involved in cell wall biosynthesis. May act as a fucosyltransferase. In Arabidopsis thaliana (Mouse-ear cress), this protein is Putative fucosyltransferase-like protein (FUT12).